Here is a 198-residue protein sequence, read N- to C-terminus: Nucleoid occlusion factor SlmA (198 aa).

The region spanning 9-70 (RNRREEILQA…SLIEFIEDSL (62 aa)) is the HTH tetR-type domain. Residues 33–52 (TTAKLAANVGVSEAALYRHF) constitute a DNA-binding region (H-T-H motif). The stretch at 113–144 (ALMFEQDRLQDRINQLFERIESQLRQVLREHK) forms a coiled coil.

The protein belongs to the nucleoid occlusion factor SlmA family. In terms of assembly, homodimer. Interacts with FtsZ.

The protein resides in the cytoplasm. Its subcellular location is the nucleoid. Its function is as follows. Required for nucleoid occlusion (NO) phenomenon, which prevents Z-ring formation and cell division over the nucleoid. Acts as a DNA-associated cell division inhibitor that binds simultaneously chromosomal DNA and FtsZ, and disrupts the assembly of FtsZ polymers. SlmA-DNA-binding sequences (SBS) are dispersed on non-Ter regions of the chromosome, preventing FtsZ polymerization at these regions. This Pectobacterium carotovorum subsp. carotovorum (strain PC1) protein is Nucleoid occlusion factor SlmA.